A 197-amino-acid polypeptide reads, in one-letter code: Holliday junction branch migration complex subunit RuvA (197 aa).

The interval 1–62 is domain I; sequence MIEFVRGEVA…EDQEVLFGFR (62 aa). The domain II stretch occupies residues 63-141; sequence SRRERALFTK…ELAPDYIPSE (79 aa). Residues 141 to 145 form a flexible linker region; it reads EGLFA. The interval 146–197 is domain III; sequence QGNAELNEACEALTALGYSEREVEKVKKALQGEVLSTDQYVKRALQLLLNVR.

It belongs to the RuvA family. Homotetramer. Forms an RuvA(8)-RuvB(12)-Holliday junction (HJ) complex. HJ DNA is sandwiched between 2 RuvA tetramers; dsDNA enters through RuvA and exits via RuvB. An RuvB hexamer assembles on each DNA strand where it exits the tetramer. Each RuvB hexamer is contacted by two RuvA subunits (via domain III) on 2 adjacent RuvB subunits; this complex drives branch migration. In the full resolvosome a probable DNA-RuvA(4)-RuvB(12)-RuvC(2) complex forms which resolves the HJ.

The protein resides in the cytoplasm. Functionally, the RuvA-RuvB-RuvC complex processes Holliday junction (HJ) DNA during genetic recombination and DNA repair, while the RuvA-RuvB complex plays an important role in the rescue of blocked DNA replication forks via replication fork reversal (RFR). RuvA specifically binds to HJ cruciform DNA, conferring on it an open structure. The RuvB hexamer acts as an ATP-dependent pump, pulling dsDNA into and through the RuvAB complex. HJ branch migration allows RuvC to scan DNA until it finds its consensus sequence, where it cleaves and resolves the cruciform DNA. This is Holliday junction branch migration complex subunit RuvA from Exiguobacterium sibiricum (strain DSM 17290 / CCUG 55495 / CIP 109462 / JCM 13490 / 255-15).